The sequence spans 196 residues: MSIPKSTPDRRVTRVMGVDPGLTRCGVGVVEGGLGSSLKLIAVGVIRTPADLDHAHRLLRIHDGLEEWRDHTRPDAIAVEKVFAQHNRNTVAGTAQAAGIAMMIAARHGLPVALHTPSEVKAAISGSGRADKAQVGFMVARVLRLSAPPKPADAADAVALAICHLWRGGAARRIEAAVATQRRGRRVPRSWKDLAR.

Active-site residues include aspartate 19, glutamate 80, and aspartate 153. Mg(2+)-binding residues include aspartate 19, glutamate 80, and aspartate 153.

It belongs to the RuvC family. In terms of assembly, homodimer which binds Holliday junction (HJ) DNA. The HJ becomes 2-fold symmetrical on binding to RuvC with unstacked arms; it has a different conformation from HJ DNA in complex with RuvA. In the full resolvosome a probable DNA-RuvA(4)-RuvB(12)-RuvC(2) complex forms which resolves the HJ. Mg(2+) serves as cofactor.

It is found in the cytoplasm. It catalyses the reaction Endonucleolytic cleavage at a junction such as a reciprocal single-stranded crossover between two homologous DNA duplexes (Holliday junction).. Functionally, the RuvA-RuvB-RuvC complex processes Holliday junction (HJ) DNA during genetic recombination and DNA repair. Endonuclease that resolves HJ intermediates. Cleaves cruciform DNA by making single-stranded nicks across the HJ at symmetrical positions within the homologous arms, yielding a 5'-phosphate and a 3'-hydroxyl group; requires a central core of homology in the junction. The consensus cleavage sequence is 5'-(A/T)TT(C/G)-3'. Cleavage occurs on the 3'-side of the TT dinucleotide at the point of strand exchange. HJ branch migration catalyzed by RuvA-RuvB allows RuvC to scan DNA until it finds its consensus sequence, where it cleaves and resolves the cruciform DNA. This chain is Crossover junction endodeoxyribonuclease RuvC, found in Cutibacterium acnes (strain DSM 16379 / KPA171202) (Propionibacterium acnes).